Reading from the N-terminus, the 333-residue chain is Torsin-1A (333 aa).

A signal peptide spans Met1–Ala20. The tract at residues Lys92–Gly252 is interaction with SNAPIN. Gly103–Asn110 serves as a coordination point for ATP. Residues Asn144 and Asn159 are each glycosylated (N-linked (GlcNAc...) asparagine). An interaction with KLC1 region spans residues Gly252–Asp333. The interaction with SYNE3 stretch occupies residues Lys313–Asp333.

It belongs to the ClpA/ClpB family. Torsin subfamily. Homohexamer. Interacts with TOR1B; the interaction may be specific of neural tissues. Interacts (ATP-bound) with TOR1AIP1 and TOR1AIP2; the interactions induce ATPase activity. Interacts with KLHL14; preferentially when ATP-free. Interacts with KLC1 (via TPR repeats); the interaction associates TOR1A with the kinesin oligomeric complex. Interacts with COPS4; the interaction associates TOR1A with the CSN complex. Interacts with SNAPIN; the interaction is direct and associates SNAPIN with the CSN complex. Interacts with STON2. Interacts (ATP-bound) with SYNE3 (via KASH domain); the interaction is required for SYNE3 nuclear envelope localization. Interacts with VIM; the interaction associates TOR1A with the cytoskeleton. Interacts with PLEC. Interacts (ATP-bound) with SLC6A3; regulates SLC6A3 transport to the plasma membrane. In terms of processing, N-glycosylated. Widely expressed (at protein level).

It localises to the endoplasmic reticulum lumen. It is found in the nucleus membrane. The protein resides in the cell projection. The protein localises to the growth cone. Its subcellular location is the cytoplasmic vesicle membrane. It localises to the synapse. It is found in the synaptosome. The protein resides in the cytoplasm. The protein localises to the cytoskeleton. Its subcellular location is the cytoplasmic vesicle. It localises to the secretory vesicle. It is found in the synaptic vesicle. The enzyme catalyses ATP + H2O = ADP + phosphate + H(+). Its function is as follows. Protein with chaperone functions important for the control of protein folding, processing, stability and localization as well as for the reduction of misfolded protein aggregates. Involved in the regulation of synaptic vesicle recycling, controls STON2 protein stability in collaboration with the COP9 signalosome complex (CSN). In the nucleus, may link the cytoskeleton with the nuclear envelope, this mechanism seems to be crucial for the control of nuclear polarity, cell movement and, specifically in neurons, nuclear envelope integrity. Participates in the cellular trafficking and may regulate the subcellular location of multipass membrane proteins such as the dopamine transporter SLC6A3, leading to the modulation of dopamine neurotransmission. In the endoplasmic reticulum, plays a role in the quality control of protein folding by increasing clearance of misfolded proteins such as SGCE variants or holding them in an intermediate state for proper refolding. May have a redundant function with TOR1B in non-neural tissues. The protein is Torsin-1A (Tor1a) of Mus musculus (Mouse).